We begin with the raw amino-acid sequence, 159 residues long: Transmembrane protein 89 (159 aa).

Residues 1 to 24 form the signal peptide; it reads MLHVLASLPLLLLLVTSASTHAWS. Over 25–63 the chain is Extracellular; that stretch reads RPLWYQVGLDLQPWGCQPKSVEGCRGGLSCPGYWLGPGA. A helical membrane pass occupies residues 64–86; sequence SRIYPVAAVMITTTMLMICRKIL. Over 87-159 the chain is Cytoplasmic; the sequence is QGRRRSQATK…QIKGTSTQSG (73 aa). Residues 91-110 are disordered; that stretch reads RSQATKGEHPQVTTEPCGPW.

The protein localises to the membrane. The sequence is that of Transmembrane protein 89 (TMEM89) from Homo sapiens (Human).